Consider the following 580-residue polypeptide: E3 ubiquitin-protein ligase TRIM45 (580 aa).

The RING-type zinc finger occupies 29 to 98 (CPLCMGLFKA…QIGILCPVCD (70 aa)). B box-type zinc fingers lie at residues 130-176 (GQGL…MVDL) and 186-227 (GKPI…CDFT). Zn(2+)-binding residues include Cys135, Cys138, Cys158, His162, Cys191, His194, Cys214, and His219. Residues 281 to 335 (SEGYIKAIEEHRDKLLKQLEDIRVQKENSLQLQKAQLEQLLADMRTGVEFTEHLL) are a coiled coil. One copy of the Filamin repeat lies at 394 to 497 (TKEVDPAKCV…VQGSPFTVTV (104 aa)).

It belongs to the TRIM/RBCC family.

It localises to the cytoplasm. Its subcellular location is the nucleus. The enzyme catalyses S-ubiquitinyl-[E2 ubiquitin-conjugating enzyme]-L-cysteine + [acceptor protein]-L-lysine = [E2 ubiquitin-conjugating enzyme]-L-cysteine + N(6)-ubiquitinyl-[acceptor protein]-L-lysine.. E3 ubiquitin-protein ligase that plays a role in the regulation of inflammatory response. Mechanistically, mediates the 'Lys-48'-linked polyubiquitination of TAB2, a regulatory protein of the kinase TAK1, leading to its degradation via the proteasomal pathway and inhibition of the TLR-mediated inflammatory immune response. May act as a transcriptional repressor in mitogen-activated protein kinase signaling pathway. The chain is E3 ubiquitin-protein ligase TRIM45 (TRIM45) from Bos taurus (Bovine).